The following is a 601-amino-acid chain: Aspartate--tRNA ligase (601 aa).

E183 contributes to the L-aspartate binding site. The tract at residues 207 to 210 is aspartate; it reads QIFK. R229 lines the L-aspartate pocket. Residues 229–231 and Q238 contribute to the ATP site; that span reads RDE. H457 provides a ligand contact to L-aspartate. ATP is bound at residue E497. R504 contacts L-aspartate. 549–552 lines the ATP pocket; sequence GIDR.

It belongs to the class-II aminoacyl-tRNA synthetase family. Type 1 subfamily. As to quaternary structure, homodimer.

It is found in the cytoplasm. The catalysed reaction is tRNA(Asp) + L-aspartate + ATP = L-aspartyl-tRNA(Asp) + AMP + diphosphate. Its function is as follows. Catalyzes the attachment of L-aspartate to tRNA(Asp) in a two-step reaction: L-aspartate is first activated by ATP to form Asp-AMP and then transferred to the acceptor end of tRNA(Asp). This is Aspartate--tRNA ligase from Leptospira interrogans serogroup Icterohaemorrhagiae serovar Lai (strain 56601).